Here is a 326-residue protein sequence, read N- to C-terminus: Putative HTH-type transcriptional regulatory protein MmarC5_0898 (326 aa).

Positions Leu-128–Ile-183 constitute an HTH cro/C1-type domain. Residues Val-139–Gln-158 constitute a DNA-binding region (H-T-H motif).

This is Putative HTH-type transcriptional regulatory protein MmarC5_0898 from Methanococcus maripaludis (strain C5 / ATCC BAA-1333).